A 247-amino-acid polypeptide reads, in one-letter code: 23S rRNA (guanosine-2'-O-)-methyltransferase RlmB (247 aa).

Positions 197, 217, and 226 each coordinate S-adenosyl-L-methionine.

Belongs to the class IV-like SAM-binding methyltransferase superfamily. RNA methyltransferase TrmH family. RlmB subfamily.

The protein resides in the cytoplasm. The catalysed reaction is guanosine(2251) in 23S rRNA + S-adenosyl-L-methionine = 2'-O-methylguanosine(2251) in 23S rRNA + S-adenosyl-L-homocysteine + H(+). In terms of biological role, specifically methylates the ribose of guanosine 2251 in 23S rRNA. This chain is 23S rRNA (guanosine-2'-O-)-methyltransferase RlmB, found in Vibrio parahaemolyticus serotype O3:K6 (strain RIMD 2210633).